Here is a 128-residue protein sequence, read N- to C-terminus: MGDYGPFGFDPDEFDRVIREGSEGLRDAFERIGRFLSSSGAGTGWSAIFEDLSRRSRPAPETAGEAGDGVWAIYTVDADGGARVEQVYATELDALRANKDNTDPKRKVRFLPYGIAVSVLDDPVDEAQ.

This is an uncharacterized protein from Mycobacterium tuberculosis (strain CDC 1551 / Oshkosh).